A 665-amino-acid polypeptide reads, in one-letter code: Anaphase-promoting complex subunit 3 (665 aa).

Residues 115–148 (SCMLDVLGTMYKKAGFLKKATDCFVEAVSINPYN) form a TPR 1 repeat. Residues 191–257 (VPEPSFLKKS…HQSLKLQSQS (67 aa)) mediate DNA binding. 8 TPR repeats span residues 329–362 (LLKL…QQNT), 363–396 (PFVL…SPSR), 431–464 (PESW…DPTF), 466–498 (YAYT…NVRH), 499–532 (YNAW…NPNN), 534–566 (VLIT…DEKS), 568–600 (LARF…APDE), and 601–634 (ANVH…DGKA).

This sequence belongs to the APC3/CDC27 family. In terms of assembly, the APC/C is composed of at least 13 subunits: apc1, apc2, nuc2, apc4, apc5, cut9, apc8, apc10, apc11, hcn1, apc13, apc14 and apc15. Interacts with apc10 and cut9.

Its subcellular location is the nucleus. Functionally, component of the anaphase-promoting complex/cyclosome (APC/C), a cell cycle-regulated E3 ubiquitin-protein ligase complex that controls progression through mitosis and the G1 phase of the cell cycle. The APC/C is thought to confer substrate specificity and, in the presence of ubiquitin-conjugating E2 enzymes, it catalyzes the formation of protein-ubiquitin conjugates that are subsequently degraded by the 26S proteasome. Interacts with spindle apparatus, chromosomes, or nuclear envelope, and interconnect nuclear and cytoskeletal functions in mitosis, so the elongation of the spindle in anaphase is blocked. This Schizosaccharomyces pombe (strain 972 / ATCC 24843) (Fission yeast) protein is Anaphase-promoting complex subunit 3 (nuc2).